We begin with the raw amino-acid sequence, 206 residues long: Glycerol-3-phosphate acyltransferase (206 aa).

5 helical membrane-spanning segments follow: residues 14–34 (IALA…GLIL), 67–87 (ATLL…GYFL), 91–111 (AAII…WIGF), 124–144 (LLGV…AVAV), and 148–168 (YSSL…LILG).

This sequence belongs to the PlsY family. In terms of assembly, probably interacts with PlsX.

The protein resides in the cell inner membrane. The catalysed reaction is an acyl phosphate + sn-glycerol 3-phosphate = a 1-acyl-sn-glycero-3-phosphate + phosphate. It participates in lipid metabolism; phospholipid metabolism. Functionally, catalyzes the transfer of an acyl group from acyl-phosphate (acyl-PO(4)) to glycerol-3-phosphate (G3P) to form lysophosphatidic acid (LPA). This enzyme utilizes acyl-phosphate as fatty acyl donor, but not acyl-CoA or acyl-ACP. In Rhizobium etli (strain ATCC 51251 / DSM 11541 / JCM 21823 / NBRC 15573 / CFN 42), this protein is Glycerol-3-phosphate acyltransferase.